Here is a 302-residue protein sequence, read N- to C-terminus: Oxygen-dependent coproporphyrinogen-III oxidase (302 aa).

S94 is a binding site for substrate. Residues H98 and H108 each contribute to the a divalent metal cation site. H108 (proton donor) is an active-site residue. 110–112 (NVR) provides a ligand contact to substrate. A divalent metal cation is bound by residues H147 and H177. The interval 242 to 277 (YVEFNLVWDRGTLFGLQSGGRTESILMSMPPLVRWE) is important for dimerization. Residue 260–262 (GGR) participates in substrate binding.

Belongs to the aerobic coproporphyrinogen-III oxidase family. Homodimer. It depends on a divalent metal cation as a cofactor.

The protein localises to the cytoplasm. The enzyme catalyses coproporphyrinogen III + O2 + 2 H(+) = protoporphyrinogen IX + 2 CO2 + 2 H2O. The protein operates within porphyrin-containing compound metabolism; protoporphyrin-IX biosynthesis; protoporphyrinogen-IX from coproporphyrinogen-III (O2 route): step 1/1. Functionally, involved in the heme biosynthesis. Catalyzes the aerobic oxidative decarboxylation of propionate groups of rings A and B of coproporphyrinogen-III to yield the vinyl groups in protoporphyrinogen-IX. This chain is Oxygen-dependent coproporphyrinogen-III oxidase, found in Chromobacterium violaceum (strain ATCC 12472 / DSM 30191 / JCM 1249 / CCUG 213 / NBRC 12614 / NCIMB 9131 / NCTC 9757 / MK).